The chain runs to 67 residues: DNA-directed RNA polymerase subunit omega (67 aa).

The protein belongs to the RNA polymerase subunit omega family. The RNAP catalytic core consists of 2 alpha, 1 beta, 1 beta' and 1 omega subunit. When a sigma factor is associated with the core the holoenzyme is formed, which can initiate transcription.

The catalysed reaction is RNA(n) + a ribonucleoside 5'-triphosphate = RNA(n+1) + diphosphate. Its function is as follows. Promotes RNA polymerase assembly. Latches the N- and C-terminal regions of the beta' subunit thereby facilitating its interaction with the beta and alpha subunits. This is DNA-directed RNA polymerase subunit omega from Burkholderia pseudomallei (strain 1106a).